Consider the following 262-residue polypeptide: Ribose-5-phosphate isomerase A (262 aa).

Residues 33-36, 89-92, and 102-105 each bind substrate; these read TGST, DGAD, and KGGG. E111 serves as the catalytic Proton acceptor. K129 contributes to the substrate binding site.

The protein belongs to the ribose 5-phosphate isomerase family. Homodimer.

The enzyme catalyses aldehydo-D-ribose 5-phosphate = D-ribulose 5-phosphate. Its pathway is carbohydrate degradation; pentose phosphate pathway; D-ribose 5-phosphate from D-ribulose 5-phosphate (non-oxidative stage): step 1/1. Catalyzes the reversible conversion of ribose-5-phosphate to ribulose 5-phosphate. This chain is Ribose-5-phosphate isomerase A, found in Ruegeria pomeroyi (strain ATCC 700808 / DSM 15171 / DSS-3) (Silicibacter pomeroyi).